The following is a 706-amino-acid chain: Serotransferrin (706 aa).

The first 19 residues, 1-19, serve as a signal peptide directing secretion; that stretch reads MRLAIRALLACAVLGLCLA. Transferrin-like domains follow at residues 23–349 and 363–691; these read VRWC…NLRE and VKWC…NLRQ. 2 disulfides stabilise this stretch: cysteine 26-cysteine 64 and cysteine 36-cysteine 55. Arginine 40 carries the post-translational modification Dimethylated arginine. Fe(3+)-binding residues include aspartate 79 and tyrosine 111. Cystine bridges form between cysteine 134–cysteine 215, cysteine 174–cysteine 190, cysteine 177–cysteine 198, cysteine 187–cysteine 200, and cysteine 248–cysteine 262. Residues threonine 136, arginine 140, alanine 142, and glycine 143 each contribute to the hydrogencarbonate site. A Fe(3+)-binding site is contributed by tyrosine 209. Histidine 270 provides a ligand contact to Fe(3+). 11 cysteine pairs are disulfide-bonded: cysteine 360/cysteine 623, cysteine 366/cysteine 398, cysteine 376/cysteine 389, cysteine 423/cysteine 701, cysteine 441/cysteine 664, cysteine 474/cysteine 550, cysteine 498/cysteine 692, cysteine 508/cysteine 522, cysteine 519/cysteine 533, cysteine 590/cysteine 604, and cysteine 642/cysteine 647. A Phosphoserine modification is found at serine 391. Positions 413 and 449 each coordinate Fe(3+). The hydrogencarbonate site is built by threonine 476, arginine 480, alanine 482, and glycine 483. Residue asparagine 515 is glycosylated (N-linked (GlcNAc...) asparagine). Position 544 (tyrosine 544) interacts with Fe(3+). Residue histidine 612 participates in Fe(3+) binding. Residue serine 693 is modified to Phosphoserine.

It belongs to the transferrin family. In terms of assembly, monomer. Part of a complex composed of SLC40A1/ferroportin, TF/transferrin and HEPH/hephaestin that transfers iron from cells to transferrin. As to expression, expressed by the liver and secreted in plasma.

It localises to the secreted. Functionally, transferrins are iron binding transport proteins which can bind two Fe(3+) ions in association with the binding of an anion, usually bicarbonate. It is responsible for the transport of iron from sites of absorption and heme degradation to those of storage and utilization. Serum transferrin may also have a further role in stimulating cell proliferation. The sequence is that of Serotransferrin (TF) from Equus caballus (Horse).